We begin with the raw amino-acid sequence, 134 residues long: Small ribosomal subunit protein uS11 (134 aa).

The protein belongs to the universal ribosomal protein uS11 family. In terms of assembly, part of the 30S ribosomal subunit. Interacts with proteins S7 and S18. Binds to IF-3.

In terms of biological role, located on the platform of the 30S subunit, it bridges several disparate RNA helices of the 16S rRNA. Forms part of the Shine-Dalgarno cleft in the 70S ribosome. The chain is Small ribosomal subunit protein uS11 from Delftia acidovorans (strain DSM 14801 / SPH-1).